We begin with the raw amino-acid sequence, 151 residues long: Putative pre-16S rRNA nuclease (151 aa).

This sequence belongs to the YqgF nuclease family.

Its subcellular location is the cytoplasm. Could be a nuclease involved in processing of the 5'-end of pre-16S rRNA. This is Putative pre-16S rRNA nuclease from Thermosynechococcus vestitus (strain NIES-2133 / IAM M-273 / BP-1).